The sequence spans 104 residues: Translation initiation factor 1A (104 aa).

Positions 1–14 (MRGQQAPPQQPTRV) are enriched in low complexity. The interval 1–20 (MRGQQAPPQQPTRVRTPREN) is disordered. One can recognise an S1-like domain in the interval 12 to 87 (TRVRTPRENE…EKCDVIWRYT (76 aa)).

The protein belongs to the eIF-1A family.

Seems to be required for maximal rate of protein biosynthesis. Enhances ribosome dissociation into subunits and stabilizes the binding of the initiator Met-tRNA(I) to 40 S ribosomal subunits. The chain is Translation initiation factor 1A (eIF1A) from Methanococcus maripaludis (strain C6 / ATCC BAA-1332).